We begin with the raw amino-acid sequence, 101 residues long: Small ribosomal subunit protein bS18c (101 aa).

This sequence belongs to the bacterial ribosomal protein bS18 family. Part of the 30S ribosomal subunit.

It localises to the plastid. Its subcellular location is the chloroplast. In Aethionema cordifolium (Lebanon stonecress), this protein is Small ribosomal subunit protein bS18c.